Here is a 433-residue protein sequence, read N- to C-terminus: FAD-dependent monooxygenase notI' (433 aa).

The FAD site is built by glutamate 45 and arginine 117. The active site involves arginine 195. Positions 314 and 327 each coordinate FAD.

This sequence belongs to the paxM FAD-dependent monooxygenase family. FAD serves as cofactor.

Its pathway is alkaloid biosynthesis. Its function is as follows. FAD-dependent monooxygenase; part of the gene cluster that mediates the biosynthesis of notoamide, a fungal indole alkaloid that belongs to a family of natural products containing a characteristic bicyclo[2.2.2]diazaoctane core. The first step of notoamide biosynthesis involves coupling of L-proline and L-tryptophan by the bimodular NRPS notE', to produce cyclo-L-tryptophan-L-proline called brevianamide F. The reverse prenyltransferase notF' then acts as a deoxybrevianamide E synthase and converts brevianamide F to deoxybrevianamide E via reverse prenylation at C-2 of the indole ring leading to the bicyclo[2.2.2]diazaoctane core. Deoxybrevianamide E is further hydroxylated at C-6 of the indole ring, likely catalyzed by the cytochrome P450 monooxygenase notG', to yield 6-hydroxy-deoxybrevianamide E. 6-hydroxy-deoxybrevianamide E is a specific substrate of the prenyltransferase notC' for normal prenylation at C-7 to produce 6-hydroxy-7-prenyl-deoxybrevianamide, also called notoamide S. As the proposed pivotal branching point in notoamide biosynthesis, notoamide S can be diverted to notoamide E through an oxidative pyran ring closure putatively catalyzed by either notH' cytochrome P450 monooxygenase or the notD' FAD-linked oxidoreductase. This step would be followed by an indole 2,3-epoxidation-initiated pinacol-like rearrangement catalyzed by the notB' FAD-dependent monooxygenase leading to the formation of notoamide C and notoamide D. On the other hand notoamide S is converted to notoamide T by notH' (or notD'), a bifunctional oxidase that also functions as the intramolecular Diels-Alderase responsible for generation of (-)-notoamide T. To generate antipodal (+)-notoaminide T, notH (or notD) in Aspergillus strain MF297-2 is expected to catalyze a Diels-Alder reaction leading to the opposite stereochemistry. The remaining oxidoreductase notD' (or notH') likely catalyzes the oxidative pyran ring formation to yield (-)-stephacidin A. The FAD-dependent monooxygenase notI' is highly similar to notB' and is predicted to catalyze a similar conversion from (-)-stephacidin A to (+)-notoamide B via the 2,3-epoxidation of (-)-stephacidin A followed by a pinacol-type rearrangement. Finally, it remains unclear which enzyme could be responsible for the final hydroxylation steps leading to notoamide A and sclerotiamide. In Aspergillus versicolor, this protein is FAD-dependent monooxygenase notI'.